Consider the following 452-residue polypeptide: Glycylpeptide N-tetradecanoyltransferase (452 aa).

Tetradecanoyl-CoA contacts are provided by residues 38-41 (YKFW), 171-173 (LCI), and 179-183 (SKRLA). Residue Leu-452 is the Proton acceptor; via carboxylate of the active site.

This sequence belongs to the NMT family. Monomer.

It localises to the cytoplasm. It carries out the reaction N-terminal glycyl-[protein] + tetradecanoyl-CoA = N-tetradecanoylglycyl-[protein] + CoA + H(+). Its function is as follows. Adds a myristoyl group to the N-terminal glycine residue of certain cellular proteins. This Eremothecium gossypii (strain ATCC 10895 / CBS 109.51 / FGSC 9923 / NRRL Y-1056) (Yeast) protein is Glycylpeptide N-tetradecanoyltransferase (NMT1).